Here is a 417-residue protein sequence, read N- to C-terminus: Serine hydroxymethyltransferase (417 aa).

(6S)-5,6,7,8-tetrahydrofolate contacts are provided by residues Leu-121 and 125 to 127 (GHL). Lys-230 carries the N6-(pyridoxal phosphate)lysine modification. 355 to 357 (SPF) contacts (6S)-5,6,7,8-tetrahydrofolate.

The protein belongs to the SHMT family. As to quaternary structure, homodimer. Pyridoxal 5'-phosphate serves as cofactor.

Its subcellular location is the cytoplasm. It carries out the reaction (6R)-5,10-methylene-5,6,7,8-tetrahydrofolate + glycine + H2O = (6S)-5,6,7,8-tetrahydrofolate + L-serine. It functions in the pathway one-carbon metabolism; tetrahydrofolate interconversion. Its pathway is amino-acid biosynthesis; glycine biosynthesis; glycine from L-serine: step 1/1. In terms of biological role, catalyzes the reversible interconversion of serine and glycine with tetrahydrofolate (THF) serving as the one-carbon carrier. This reaction serves as the major source of one-carbon groups required for the biosynthesis of purines, thymidylate, methionine, and other important biomolecules. Also exhibits THF-independent aldolase activity toward beta-hydroxyamino acids, producing glycine and aldehydes, via a retro-aldol mechanism. The sequence is that of Serine hydroxymethyltransferase from Ruthia magnifica subsp. Calyptogena magnifica.